The primary structure comprises 395 residues: ATP phosphoribosyltransferase regulatory subunit (395 aa).

This sequence belongs to the class-II aminoacyl-tRNA synthetase family. HisZ subfamily. As to quaternary structure, heteromultimer composed of HisG and HisZ subunits.

Its subcellular location is the cytoplasm. It participates in amino-acid biosynthesis; L-histidine biosynthesis; L-histidine from 5-phospho-alpha-D-ribose 1-diphosphate: step 1/9. In terms of biological role, required for the first step of histidine biosynthesis. May allow the feedback regulation of ATP phosphoribosyltransferase activity by histidine. The chain is ATP phosphoribosyltransferase regulatory subunit from Pseudomonas fluorescens (strain Pf0-1).